We begin with the raw amino-acid sequence, 316 residues long: Olfactory receptor 2H1 (316 aa).

Over 1–23 (MVNQSSPMGFLLLGFSEHPALER) the chain is Extracellular. Asn-3 carries N-linked (GlcNAc...) asparagine glycosylation. Residues 24–47 (TLFVVVFTSYLLTLVGNTLIILLS) form a helical membrane-spanning segment. The Cytoplasmic portion of the chain corresponds to 48–55 (VLYPRLHS). The helical transmembrane segment at 56–77 (PMYFFLSDLSFLDLCFTTSCVP) threads the bilayer. Over 78–98 (QMLVNLWGPKKTISFLGCSVQ) the chain is Extracellular. A disulfide bridge links Cys-95 with Cys-187. The helical transmembrane segment at 99–118 (LFIFLSLGTTECILLTVMAF) threads the bilayer. At 119 to 137 (DRYVAVCQPLHYATIIHPR) the chain is on the cytoplasmic side. Residues 138–156 (LCWQLASVAWVMSLVQSIV) traverse the membrane as a helical segment. The Extracellular portion of the chain corresponds to 157-193 (QTPSTLHLPFCPHQQIDDFLCEVPSLIRLSCGDTSYN). A helical membrane pass occupies residues 194 to 217 (EIQLAVSSVIFVVVPLSLILASYG). The Cytoplasmic segment spans residues 218–234 (ATAQAVLRINSATAWRK). The chain crosses the membrane as a helical span at residues 235-257 (AFGTCSSHLTVVTLFYSSVIAVY). Residues 258–270 (LQPKNPYAQGRGK) are Extracellular-facing. The chain crosses the membrane as a helical span at residues 271 to 290 (FFGLFYAVGTPSLNPLVYTL). Residues 291-316 (RNKEIKRALRRLLGKERDSRESWRAA) are Cytoplasmic-facing.

This sequence belongs to the G-protein coupled receptor 1 family.

It is found in the cell membrane. In terms of biological role, odorant receptor. The protein is Olfactory receptor 2H1 (OR2H1) of Homo sapiens (Human).